A 78-amino-acid polypeptide reads, in one-letter code: Sec-independent protein translocase protein TatA (78 aa).

The chain crosses the membrane as a helical span at residues 4–21 (SFQHILILLVVVLLLFGR). The interval 49-78 (TAKSDSIKTIDNTGKPTNVQANPQRQDSTV) is disordered. Residues 57–78 (TIDNTGKPTNVQANPQRQDSTV) are compositionally biased toward polar residues.

The protein belongs to the TatA/E family. In terms of assembly, the Tat system comprises two distinct complexes: a TatABC complex, containing multiple copies of TatA, TatB and TatC subunits, and a separate TatA complex, containing only TatA subunits. Substrates initially bind to the TatABC complex, which probably triggers association of the separate TatA complex to form the active translocon.

Its subcellular location is the cell inner membrane. In terms of biological role, part of the twin-arginine translocation (Tat) system that transports large folded proteins containing a characteristic twin-arginine motif in their signal peptide across membranes. TatA could form the protein-conducting channel of the Tat system. The polypeptide is Sec-independent protein translocase protein TatA (Afipia carboxidovorans (strain ATCC 49405 / DSM 1227 / KCTC 32145 / OM5) (Oligotropha carboxidovorans)).